A 580-amino-acid polypeptide reads, in one-letter code: Methyl-CpG-binding domain protein 4 (580 aa).

A disordered region spans residues 1–36 (MGTTGLESLSLGDRGAAPTVTSSERLVPDPPNDLRK). One can recognise an MBD domain in the interval 76-148 (ATAGTECRKS…EDFDFTVLSK (73 aa)). Phosphoserine occurs at positions 318 and 428. Asp560 is a catalytic residue.

In terms of assembly, interacts with MLH1.

It localises to the nucleus. In terms of biological role, mismatch-specific DNA N-glycosylase involved in DNA repair. Has thymine glycosylase activity and is specific for G:T mismatches within methylated and unmethylated CpG sites. Can also remove uracil or 5-fluorouracil in G:U mismatches. Has no lyase activity. Was first identified as methyl-CpG-binding protein. This is Methyl-CpG-binding domain protein 4 from Homo sapiens (Human).